The chain runs to 509 residues: MQHNVLILDFGSQYTQLIARRVRELNIFCEIFPFDKIPTDLSIYKAVILGGSPFSVRSEDALHPDLSEIRGKLPLLAVCYGAQYLAHFSGGEVAASNTREYGRANLTYIKENETFFENVNLNSQVWMSHSDSIKKLPTNGIKLASTQDVENAAYKIEGETTYAIQYHPEVFHSTDGKQMLENFLVKIAQVPQNFTPNAFVSDMVAELKEKLQDDKVVLGLSGGVDSTVAAVLLHQAIGKNLYCIFVNNGLLRKNEFQSVLDQYKGMGLNVKGVDAGDRFLSELAGISDPETKRKTIGRVFIEVFDDESKIIENVKWLAQGTIYPDVIESVSVKGPSATIKSHHNVGGLPDYMKLQIVEPLRMLFKDEVRRVGATLGIDAELLGRHPFPGPGLSIRILGDITPEKVQILQDVDAVFINGLKEHGLYDKVWQAGAILLPVNSVGVMGDERTYEKVVALRAVESTDGMTADWVHLPYEFLMKISNDIINKVKGVNRVVYDISSKPPATIEWE.

The Glutamine amidotransferase type-1 domain maps to 4–193; it reads NVLILDFGSQ…LVKIAQVPQN (190 aa). Residue C79 is the Nucleophile of the active site. Catalysis depends on residues H167 and E169. A GMPS ATP-PPase domain is found at 194–384; that stretch reads FTPNAFVSDM…LGIDAELLGR (191 aa). 221 to 227 serves as a coordination point for ATP; it reads SGGVDST.

In terms of assembly, homodimer.

It carries out the reaction XMP + L-glutamine + ATP + H2O = GMP + L-glutamate + AMP + diphosphate + 2 H(+). The protein operates within purine metabolism; GMP biosynthesis; GMP from XMP (L-Gln route): step 1/1. In terms of biological role, catalyzes the synthesis of GMP from XMP. The sequence is that of GMP synthase [glutamine-hydrolyzing] from Flavobacterium psychrophilum (strain ATCC 49511 / DSM 21280 / CIP 103535 / JIP02/86).